The chain runs to 139 residues: Translation initiation factor 2 subunit beta (139 aa).

This sequence belongs to the eIF-2-beta/eIF-5 family. As to quaternary structure, heterotrimer composed of an alpha, a beta and a gamma chain.

In terms of biological role, eIF-2 functions in the early steps of protein synthesis by forming a ternary complex with GTP and initiator tRNA. This chain is Translation initiation factor 2 subunit beta, found in Saccharolobus islandicus (strain Y.N.15.51 / Yellowstone #2) (Sulfolobus islandicus).